We begin with the raw amino-acid sequence, 796 residues long: MKENYCLQAALVCLSMLYHSQAFALERRSHLHPSFHGHHEKGKEGQVLQRSKRGWVWNQFFVIEEYTGPDPVLVGRLHSDIDSGDGNIKYILSGEGAGTIFVIDDKSGNIHATKTLDREERAQYTLMAQAVDRDTNRPLEPPSEFIVKVQDINDNPPEFLHEIYHANVPERSNVGTSVIQVTASDADDPTYGNSAKLVYSILEGQPYFSVEAQTGIIRTALPNMDREAKEEYHVVIQAKDMGGHMGGLSGTTKVTITLTDVNDNPPKFPQSVYQMSVSEAAVPGEEVGRVKAKDPDIGENGLVTYNIVDGDGIELFEITTDYETQDGVVKLKKPVDFETKRAYSLKIEAANVHIDPKFISNGPFKDTVTVKISVEDADEPPMFLAPSYIHEVQENAAAGTVVGRVHAKDPDAANSPIRYSIDRHTDLDRFFTINPEDGFIKTTKPLDREETAWLNISVFAAEIHNRHQETKVPVAIRVLDVNDNAPKFAAPYEGFICESDHPKALSNQPIVTVSADDQDDTANGPRFIFSLPPEIMHNPNFTVRDNRDNTAGVYARRGGFSRQKQDFYLLPIVISDGGIPPMSSTNTLTIKVCGCDVNGALLSCNAEAYILNAGLSTGALIAILACIVILLVIVVLFVTLRRQKKEPLIVFEEEDVRENIITYDDEGGGEEDTEAFDIATLQNPDGINGFIPRKDIKPEYQYMPRPGLRPAPNSVDVDDFINTRIQEADNDPTAPPYDSIQIYGYEGRGSVAGSLSSLESATTDSDLDYDYLQNWGPRFKKLADLYGSKDTFDDDS.

Positions 1 to 24 (MKENYCLQAALVCLSMLYHSQAFA) are cleaved as a signal peptide. Residues 25 to 53 (LERRSHLHPSFHGHHEKGKEGQVLQRSKR) constitute a propeptide that is removed on maturation. Cadherin domains lie at 54-159 (GWVW…PPEF), 160-268 (LHEI…PPKF), 269-383 (PQSV…PPMF), 384-486 (LAPS…DNAP), and 487-612 (KFAA…YILN). At 54-617 (GWVWNQFFVI…AYILNAGLST (564 aa)) the chain is on the extracellular side. N-linked (GlcNAc...) asparagine glycans are attached at residues N455 and N540. Residues 618–640 (GALIAILACIVILLVIVVLFVTL) form a helical membrane-spanning segment. At 641 to 796 (RRQKKEPLIV…GSKDTFDDDS (156 aa)) the chain is on the cytoplasmic side. S788 is modified (phosphoserine). Residue T791 is modified to Phosphothreonine.

In terms of assembly, interacts with PCDH8. As to expression, selectively expressed in osteoblastic cell lines, precursor cell lines of osteoblasts, and primary osteoblastic cells from calvaria, as well as in lung, testis, and brain tissues at low levels.

It localises to the cell membrane. Its function is as follows. Cadherins are calcium-dependent cell adhesion proteins. They preferentially interact with themselves in a homophilic manner in connecting cells; cadherins may thus contribute to the sorting of heterogeneous cell types. Required for proper focal adhesion assembly. Involved in the regulation of cell migration. In Mus musculus (Mouse), this protein is Cadherin-11 (Cdh11).